The primary structure comprises 274 residues: Putative HTH-type transcriptional regulator RmpR (274 aa).

Positions 18 to 88 constitute an HTH gntR-type domain; that stretch reads IERADAIVER…RSGGTFVVNQ (71 aa). Positions 46 to 65 form a DNA-binding region, H-T-H motif; sequence EAALSEMFGVGGATLREALS. Positions 250 to 265 are enriched in polar residues; that stretch reads SRPSSPATAPDGSSSA. Positions 250 to 274 are disordered; the sequence is SRPSSPATAPDGSSSAEAAMIQEGQ.

Its function is as follows. May regulate the transcription of the rmpAB operon. This is Putative HTH-type transcriptional regulator RmpR (rmpR) from Mycobacterium gastri.